We begin with the raw amino-acid sequence, 348 residues long: GMP reductase 2 (348 aa).

Residues 26-27 (SR), K78, 129-131 (DVA), and 180-181 (IG) contribute to the NADP(+) site. The K(+) site is built by G181, G183, and C186. The active-site Thioimidate intermediate is the C186. The Proton donor/acceptor role is filled by T188. R189 contributes to the K(+) binding site. Residues 219–221 (DGG), 242–243 (GG), 268–270 (GMS), and 286–290 (RASEG) each bind GMP. NADP(+) contacts are provided by residues M269 and 285–286 (YR). K291 bears the N6-acetyllysine mark. Residue 314–317 (STCT) participates in NADP(+) binding.

The protein belongs to the IMPDH/GMPR family. GuaC type 1 subfamily. Homotetramer.

It carries out the reaction IMP + NH4(+) + NADP(+) = GMP + NADPH + 2 H(+). In terms of biological role, catalyzes the irreversible NADPH-dependent deamination of GMP to IMP. It functions in the conversion of nucleobase, nucleoside and nucleotide derivatives of G to A nucleotides, and in maintaining the intracellular balance of A and G nucleotides. Plays a role in modulating cellular differentiation. This is GMP reductase 2 from Bos taurus (Bovine).